Reading from the N-terminus, the 190-residue chain is FMN reductase (NADH) RutF (190 aa).

This sequence belongs to the non-flavoprotein flavin reductase family. RutF subfamily.

It catalyses the reaction FMNH2 + NAD(+) = FMN + NADH + 2 H(+). Its function is as follows. Catalyzes the reduction of FMN to FMNH2 which is used to reduce pyrimidine by RutA via the Rut pathway. This chain is FMN reductase (NADH) RutF, found in Pantoea ananatis (strain LMG 20103).